Reading from the N-terminus, the 290-residue chain is MHFQDIIGTLNSFWANQGCLLLQPYDTEKGAGTMSPHTVLRAIGPEPWAVAYPEPCRRPTDGRYGDNPNRAQHYFQYQVLIKPSPDAIQETYLASLEALGIKAADHDIRFVEDNWESPTLGAWGVGWEVWLDGMEVTQFTYFQQCGGLDCKPVSIEITYGLERLAMYLQDVESIWDLSWNADRKYGDIWLPFEKGQCKFNFEASNPDRLKQLFAIYEAEASDLIHQQLPAPALDFVLKCSHTFNLLEARGVISVTERTATIGRIRNLARKVAEAWLVEREALGFPLLPSN.

The protein belongs to the class-II aminoacyl-tRNA synthetase family. Tetramer of two alpha and two beta subunits.

The protein resides in the cytoplasm. It catalyses the reaction tRNA(Gly) + glycine + ATP = glycyl-tRNA(Gly) + AMP + diphosphate. This is Glycine--tRNA ligase alpha subunit from Synechococcus sp. (strain CC9902).